The sequence spans 498 residues: NAD(P)H-quinone oxidoreductase chain 4, chloroplastic (498 aa).

14 helical membrane passes run 4–24 (FPWL…IVLF), 37–57 (YCIC…HFEL), 80–100 (FGID…TTLA), 112–129 (KLFY…LGTF), 134–154 (ILLF…LLSM), 167–187 (FILY…GMSL), 208–228 (ALEI…SPII), 242–262 (HYST…YGLV), 272–292 (AHSI…IYAA), 305–325 (IAYS…SISE), 330–350 (GAIL…FLAG), 386–406 (LALP…GIIT), 416–436 (ILIT…SLSI), and 463–483 (FISI…DFIF).

The protein belongs to the complex I subunit 4 family.

It localises to the plastid. Its subcellular location is the chloroplast thylakoid membrane. The catalysed reaction is a plastoquinone + NADH + (n+1) H(+)(in) = a plastoquinol + NAD(+) + n H(+)(out). The enzyme catalyses a plastoquinone + NADPH + (n+1) H(+)(in) = a plastoquinol + NADP(+) + n H(+)(out). The sequence is that of NAD(P)H-quinone oxidoreductase chain 4, chloroplastic from Phaseolus vulgaris (Kidney bean).